Consider the following 1148-residue polypeptide: Signal transducer and activator of transcription B (1148 aa).

Low complexity predominate over residues 1 to 36 (MEVTNNGSNNSSTIASTNPPTSPSTTSTSKSLPPLS). 5 disordered regions span residues 1 to 81 (MEVT…NNNN), 93 to 178 (SSSN…LSSS), 268 to 312 (NTNN…PSNG), 403 to 425 (KNNI…NSLL), and 453 to 645 (YDYN…KTVT). Residues 37–47 (FLNSQWENKQS) show a composition bias toward polar residues. Composition is skewed to low complexity over residues 48–81 (NNNN…NNNN), 106–178 (NNNN…LSSS), and 268–298 (NTNN…NNNN). Positions 466–517 (SNSSNNNSSNNNSNNNNNNNSNNNNNIIGSISPPHSSQLQQVSSPQQQQQQQ) are enriched in low complexity. Over residues 525–541 (SISSGSIKDLINSPNKE) the composition is skewed to polar residues. Low complexity predominate over residues 544 to 557 (SKSQYPSSLSQSSS). Residues 561-572 (MDTDVDSTDEFD) are compositionally biased toward acidic residues. A compositionally biased stretch (low complexity) spans 574–610 (GSNSNNNNNNNNNNNNNNNSNNSNNKKRNNSNNNNLG). The region spanning 997–1122 (WQNGFIFMFL…TIPVFKREPK (126 aa)) is the SH2 domain.

It belongs to the transcription factor STAT family. As to quaternary structure, homodimer. Does not form heterodimers with other family members.

It localises to the nucleus. Its function is as follows. Transcription factor that regulates gene expression during development. Required for optimal cell growth. The polypeptide is Signal transducer and activator of transcription B (dstB) (Dictyostelium discoideum (Social amoeba)).